Reading from the N-terminus, the 291-residue chain is Ribosomal RNA small subunit methyltransferase I (291 aa).

It belongs to the methyltransferase superfamily. RsmI family.

Its subcellular location is the cytoplasm. The enzyme catalyses cytidine(1402) in 16S rRNA + S-adenosyl-L-methionine = 2'-O-methylcytidine(1402) in 16S rRNA + S-adenosyl-L-homocysteine + H(+). In terms of biological role, catalyzes the 2'-O-methylation of the ribose of cytidine 1402 (C1402) in 16S rRNA. This Neisseria meningitidis serogroup A / serotype 4A (strain DSM 15465 / Z2491) protein is Ribosomal RNA small subunit methyltransferase I.